Here is a 522-residue protein sequence, read N- to C-terminus: Putative thymidine phosphorylase (522 aa).

The protein belongs to the thymidine/pyrimidine-nucleoside phosphorylase family. Type 2 subfamily.

It catalyses the reaction thymidine + phosphate = 2-deoxy-alpha-D-ribose 1-phosphate + thymine. The protein is Putative thymidine phosphorylase of Albidiferax ferrireducens (strain ATCC BAA-621 / DSM 15236 / T118) (Rhodoferax ferrireducens).